The primary structure comprises 40 residues: Natriuretic peptide PpNP-b (40 aa).

A propeptide spanning residues 1–8 (SGSKTANI) is cleaved from the precursor. Residues cysteine 12 and cysteine 28 are joined by a disulfide bond. Positions 20–40 (IGTTSGMGCGRPRPKPTPGGS) are disordered.

The protein belongs to the natriuretic peptide family. Expressed by the venom gland.

It is found in the secreted. In terms of biological role, snake venom natriuretic peptide that targets both NPR1 and NPR2. Exhibits hypotensive and vasodepressor activities. This is Natriuretic peptide PpNP-b from Pseudechis porphyriacus (Red-bellied black snake).